The chain runs to 181 residues: ATP-dependent protease subunit HslV (181 aa).

The active site involves Thr7. Positions 166, 169, and 172 each coordinate Na(+).

Belongs to the peptidase T1B family. HslV subfamily. A double ring-shaped homohexamer of HslV is capped on each side by a ring-shaped HslU homohexamer. The assembly of the HslU/HslV complex is dependent on binding of ATP.

Its subcellular location is the cytoplasm. The enzyme catalyses ATP-dependent cleavage of peptide bonds with broad specificity.. Its activity is regulated as follows. Allosterically activated by HslU binding. Protease subunit of a proteasome-like degradation complex believed to be a general protein degrading machinery. The protein is ATP-dependent protease subunit HslV of Anaeromyxobacter dehalogenans (strain 2CP-C).